Reading from the N-terminus, the 237-residue chain is Ribosomal RNA small subunit methyltransferase G (237 aa).

S-adenosyl-L-methionine is bound by residues G78, F83, 129–130 (AE), and R148.

It belongs to the methyltransferase superfamily. RNA methyltransferase RsmG family.

It is found in the cytoplasm. Functionally, specifically methylates the N7 position of a guanine in 16S rRNA. In Streptococcus pyogenes serotype M18 (strain MGAS8232), this protein is Ribosomal RNA small subunit methyltransferase G.